The chain runs to 314 residues: Tyrosine recombinase XerC (314 aa).

The 85-residue stretch at 1 to 85 (MNEQVEAFLR…AVKSFFTFLT (85 aa)) folds into the Core-binding (CB) domain. Positions 106 to 291 (DLPRALTPRQ…NHESSHTPHA (186 aa)) constitute a Tyr recombinase domain. Residues Arg147, Lys171, His243, Arg246, and His269 contribute to the active site. Tyr278 functions as the O-(3'-phospho-DNA)-tyrosine intermediate in the catalytic mechanism. The interval 284-314 (ESSHTPHAHPAPRASEVNGVRDEQALVPEEK) is disordered. Positions 302-314 (GVRDEQALVPEEK) are enriched in basic and acidic residues.

This sequence belongs to the 'phage' integrase family. XerC subfamily. In terms of assembly, forms a cyclic heterotetrameric complex composed of two molecules of XerC and two molecules of XerD.

Its subcellular location is the cytoplasm. Site-specific tyrosine recombinase, which acts by catalyzing the cutting and rejoining of the recombining DNA molecules. The XerC-XerD complex is essential to convert dimers of the bacterial chromosome into monomers to permit their segregation at cell division. It also contributes to the segregational stability of plasmids. The polypeptide is Tyrosine recombinase XerC (Roseiflexus castenholzii (strain DSM 13941 / HLO8)).